The sequence spans 474 residues: Stabilizer of axonemal microtubules 1 (474 aa).

Mn stretches follow at residues 30–64, 65–97, 98–131, 132–165, 166–199, 200–232, 233–266, 267–299, 300–332, 333–366, 367–400, and 401–434; these read KPCL…KGPI, PMEG…PSEE, NMDL…PCSD, KMEC…PASV, RFDN…LCNI, PLED…PCEI, PFES…GLDM, PFCN…PPED, RMDL…KKCG, RFEG…LPTE, PLDC…RGNV, and PVES…TFEE. The disordered stretch occupies residues 446 to 474; sequence VSQAGSQQSSHLSVDDSENPNQRELEVLA. The segment covering 448 to 457 has biased composition (polar residues); it reads QAGSQQSSHL.

The protein belongs to the FAM154 family. As to quaternary structure, associates with microtubules via the Mn regions. Widely expressed, with highest levels in testis. Expressed in mature spermatozoa (at protein level).

It localises to the cytoplasm. The protein resides in the cytoskeleton. It is found in the microtubule organizing center. Its subcellular location is the centrosome. The protein localises to the centriole. It localises to the cilium basal body. The protein resides in the cilium axoneme. It is found in the flagellum axoneme. May play a role in the regulation of cilium length. Stabilizes microtubules at low temperature. The chain is Stabilizer of axonemal microtubules 1 (SAXO1) from Homo sapiens (Human).